Here is a 196-residue protein sequence, read N- to C-terminus: Pyridoxal 5'-phosphate synthase subunit PdxT (196 aa).

Residue 47-49 (GES) coordinates L-glutamine. Cysteine 79 functions as the Nucleophile in the catalytic mechanism. L-glutamine contacts are provided by residues arginine 106 and 134–135 (IR). Catalysis depends on charge relay system residues histidine 170 and glutamate 172.

This sequence belongs to the glutaminase PdxT/SNO family. In the presence of PdxS, forms a dodecamer of heterodimers. Only shows activity in the heterodimer.

It catalyses the reaction aldehydo-D-ribose 5-phosphate + D-glyceraldehyde 3-phosphate + L-glutamine = pyridoxal 5'-phosphate + L-glutamate + phosphate + 3 H2O + H(+). The enzyme catalyses L-glutamine + H2O = L-glutamate + NH4(+). The protein operates within cofactor biosynthesis; pyridoxal 5'-phosphate biosynthesis. Its function is as follows. Catalyzes the hydrolysis of glutamine to glutamate and ammonia as part of the biosynthesis of pyridoxal 5'-phosphate. The resulting ammonia molecule is channeled to the active site of PdxS. This Bacillus cereus (strain G9842) protein is Pyridoxal 5'-phosphate synthase subunit PdxT.